The sequence spans 207 residues: Holliday junction branch migration complex subunit RuvA (207 aa).

The interval M1–N64 is domain I. The tract at residues T65 to P143 is domain II. The tract at residues A144 to T158 is flexible linker. The domain III stretch occupies residues S159–I207.

The protein belongs to the RuvA family. Homotetramer. Forms an RuvA(8)-RuvB(12)-Holliday junction (HJ) complex. HJ DNA is sandwiched between 2 RuvA tetramers; dsDNA enters through RuvA and exits via RuvB. An RuvB hexamer assembles on each DNA strand where it exits the tetramer. Each RuvB hexamer is contacted by two RuvA subunits (via domain III) on 2 adjacent RuvB subunits; this complex drives branch migration. In the full resolvosome a probable DNA-RuvA(4)-RuvB(12)-RuvC(2) complex forms which resolves the HJ.

It is found in the cytoplasm. Its function is as follows. The RuvA-RuvB-RuvC complex processes Holliday junction (HJ) DNA during genetic recombination and DNA repair, while the RuvA-RuvB complex plays an important role in the rescue of blocked DNA replication forks via replication fork reversal (RFR). RuvA specifically binds to HJ cruciform DNA, conferring on it an open structure. The RuvB hexamer acts as an ATP-dependent pump, pulling dsDNA into and through the RuvAB complex. HJ branch migration allows RuvC to scan DNA until it finds its consensus sequence, where it cleaves and resolves the cruciform DNA. The polypeptide is Holliday junction branch migration complex subunit RuvA (Aliivibrio fischeri (strain ATCC 700601 / ES114) (Vibrio fischeri)).